Here is a 722-residue protein sequence, read N- to C-terminus: Solute carrier organic anion transporter family member 4C1 (722 aa).

The interval 1-81 is disordered; it reads MQGSKGIENP…PGSQLSELEE (81 aa). At 1–101 the chain is on the cytoplasmic side; sequence MQGSKGIENP…QCLQRCNTPQ (101 aa). A phosphoserine mark is found at S15 and S16. Phosphothreonine is present on T19. A phosphoserine mark is found at S24, S26, and S28. Polar residues predominate over residues 25 to 46; sequence ASPSQVEVSAVASRNQNGGSQP. Residues 102–122 form a helical membrane-spanning segment; that stretch reads GFLLHYCLLALTQGIVVNGLV. Topologically, residues 123 to 141 are extracellular; sequence NISISTIEKRYEMKSSLTG. Residues 142–162 form a helical membrane-spanning segment; the sequence is LISSSYDISFCVLSLFVSFFG. At 163–168 the chain is on the cytoplasmic side; sequence ERGHKP. The chain crosses the membrane as a helical span at residues 169 to 193; that stretch reads RWLAFASFMIGLGALVFSLPHFFSG. At 194–218 the chain is on the extracellular side; the sequence is RYELGSIFEDTCLTRNSTRCSSSTS. A helical membrane pass occupies residues 219-249; the sequence is LLSNYFYVFVLGQLLLGTGGTPLYTLGTAFI. Topologically, residues 250-269 are cytoplasmic; it reads DDSVPTHKSSLYIGIGYSMS. A helical membrane pass occupies residues 270–290; that stretch reads ILGPAIGYVLGGQLLTMYIDI. At 291 to 306 the chain is on the extracellular side; the sequence is AMGQSSDLTEDDPRWL. A helical membrane pass occupies residues 307 to 331; the sequence is GAWWIGFLLAWLFAWSLIMPFSCFP. Topologically, residues 332–376 are cytoplasmic; that stretch reads KHLPGTAKIQAGKTSQTHQNNSTSFQHTDENFGKSIKDFPTAVKN. Residues 377–398 form a helical membrane-spanning segment; the sequence is LMRNTVFICLVLSTTSEALITT. Topologically, residues 399–418 are extracellular; it reads GFATFLPKFIENQFGLTSSF. The chain crosses the membrane as a helical span at residues 419–442; that stretch reads AATLGGAVLIPGAALGQILGGVLV. Topologically, residues 443 to 446 are cytoplasmic; sequence SKFK. The helical transmembrane segment at 447 to 470 threads the bilayer; it reads MKCKNTMKFALCTSGVALVLSFVF. Residues 471 to 578 lie on the Extracellular side of the membrane; sequence IYAKCENEPF…RTRCSNLPIF (108 aa). A Kazal-like domain is found at 494 to 549; the sequence is GNLTAPCNANCNCLRSYYYPLCGSDGIQYFSPCFAGCLNSVSNRKPKVYYNCSCIE. Intrachain disulfides connect C500/C530, C506/C526, and C515/C547. The chain crosses the membrane as a helical span at residues 579–601; sequence LGIFFITVIFTFMAGTPITVSIL. Residues 602–610 lie on the Cytoplasmic side of the membrane; that stretch reads RCVNHRHRS. A helical membrane pass occupies residues 611-636; the sequence is LALGVQFMLLRLLGTIPGPIIFGVII. At 637-670 the chain is on the extracellular side; it reads DSTCVLWDVNECGIKGACWIYDNIKMAHMLVAIS. A helical transmembrane segment spans residues 671–688; sequence VTCKVITIFFNGLAIVLY. Residues 689–722 lie on the Cytoplasmic side of the membrane; that stretch reads KPPPPGTEVSFQSQNVIVSTISVEEDLDKAENEG.

The protein belongs to the organo anion transporter (TC 2.A.60) family. As to expression, strongly expressed in initial segment of epididymis and seminal vesicles.

It is found in the basolateral cell membrane. The catalysed reaction is estrone 3-sulfate(out) = estrone 3-sulfate(in). It carries out the reaction L-thyroxine(out) = L-thyroxine(in). The enzyme catalyses 3,3',5-triiodo-L-thyronine(out) = 3,3',5-triiodo-L-thyronine(in). It catalyses the reaction chenodeoxycholate(out) = chenodeoxycholate(in). The catalysed reaction is glycocholate(out) = glycocholate(in). It carries out the reaction L-homoarginine(in) = L-homoarginine(out). The enzyme catalyses L-arginine(in) = L-arginine(out). It catalyses the reaction N(omega),N(omega)-dimethyl-L-arginine(out) = N(omega),N(omega)-dimethyl-L-arginine(in). In terms of biological role, mediates the transport of organic anions such as steroids (estrone 3-sulfate, chenodeoxycholate, glycocholate) and thyroid hormones (3,3',5-triiodo-L-thyronine (T3), L-thyroxine (T4)), in the kidney. Capable of transporting cAMP and pharmacological substances such as digoxin, ouabain and methotrexate. Transport is independent of sodium, chloride ion, and ATP. Transport activity is stimulated by an acidic extracellular environment due to increased substrate affinity to the transporter. The driving force for this transport activity is currently not known. The role of hydrogencarbonate (HCO3(-), bicarbonate) as the probable counteranion that exchanges for organic anions is still not well defined. Functions as an uptake transporter at the apical membrane, suggesting a role in renal reabsorption. Involved in the renal secretion of the uremic toxin ADMA (N(omega),N(omega)-dimethyl-L-arginine or asymmetrical dimethylarginine), which is associated to cardiovascular events and mortality, and the structurally related amino acids L-arginine and L-homoarginine (a cardioprotective biomarker). Can act bidirectionally, suggesting a dual protective role of this transport protein; exporting L-homoarginine after being synthesized in proximal tubule cells, and mediating uptake of ADMA from the blood into proximal tubule cells where it is degraded by the enzyme dimethylarginine dimethylaminohydrolase 1 (DDAH1). May be involved in sperm maturation by enabling directed movement of organic anions and compounds within or between cells. This ion-transporting process is important to maintain the strict epididymal homeostasis necessary for sperm maturation. May have a role in secretory functions since seminal vesicle epithelial cells are assumed to secrete proteins involved in decapacitation by modifying surface proteins to facilitate the acquisition of the ability to fertilize the egg. The sequence is that of Solute carrier organic anion transporter family member 4C1 from Mus musculus (Mouse).